Here is a 174-residue protein sequence, read N- to C-terminus: Dual-action ribosomal maturation protein DarP (174 aa).

The protein belongs to the DarP family.

The protein resides in the cytoplasm. Member of a network of 50S ribosomal subunit biogenesis factors which assembles along the 30S-50S interface, preventing incorrect 23S rRNA structures from forming. Promotes peptidyl transferase center (PTC) maturation. The polypeptide is Dual-action ribosomal maturation protein DarP (Vibrio atlanticus (strain LGP32) (Vibrio splendidus (strain Mel32))).